The following is a 508-amino-acid chain: Glycerol kinase (508 aa).

Residue T14 coordinates ADP. The ATP site is built by T14, T15, and S16. A sn-glycerol 3-phosphate-binding site is contributed by T14. An ADP-binding site is contributed by R18. Sn-glycerol 3-phosphate contacts are provided by R84, E85, Y134, and D247. Glycerol is bound by residues R84, E85, Y134, D247, and Q248. Positions 269 and 313 each coordinate ADP. T269, G313, Q317, and G416 together coordinate ATP. Residue G416 participates in ADP binding.

It belongs to the FGGY kinase family.

The enzyme catalyses glycerol + ATP = sn-glycerol 3-phosphate + ADP + H(+). Its pathway is polyol metabolism; glycerol degradation via glycerol kinase pathway; sn-glycerol 3-phosphate from glycerol: step 1/1. Its activity is regulated as follows. Inhibited by fructose 1,6-bisphosphate (FBP). In terms of biological role, key enzyme in the regulation of glycerol uptake and metabolism. Catalyzes the phosphorylation of glycerol to yield sn-glycerol 3-phosphate. In Mycoplasmoides gallisepticum (strain R(low / passage 15 / clone 2)) (Mycoplasma gallisepticum), this protein is Glycerol kinase.